The chain runs to 206 residues: Dehydration-responsive element-binding protein 2D (206 aa).

The disordered stretch occupies residues 13–40 (ANKKQRTVQASSRKGCMRGKGGPDNASC). The segment at residues 41–98 (TYKGVRQRTWGKWVAEIREPNRGARLWLGTFDTSREAALAYDSAARKLYGPEAHLNLP) is a DNA-binding region (AP2/ERF). Residues 102–139 (RSYPKTASSPASQTTPSSNTGGKSSSDSESPCSSNEMS) form a disordered region. A compositionally biased stretch (low complexity) spans 107 to 139 (TASSPASQTTPSSNTGGKSSSDSESPCSSNEMS).

This sequence belongs to the AP2/ERF transcription factor family. ERF subfamily.

It is found in the nucleus. Putative transcriptional activator that binds specifically to the DNA sequence 5'-[AG]CCGAC-3'. Binding to the C-repeat/DRE element mediates high salinity-inducible transcription. The polypeptide is Dehydration-responsive element-binding protein 2D (DREB2D) (Arabidopsis thaliana (Mouse-ear cress)).